Consider the following 289-residue polypeptide: UPF0173 metal-dependent hydrolase H16_A2129 (289 aa).

Belongs to the UPF0173 family.

This Cupriavidus necator (strain ATCC 17699 / DSM 428 / KCTC 22496 / NCIMB 10442 / H16 / Stanier 337) (Ralstonia eutropha) protein is UPF0173 metal-dependent hydrolase H16_A2129.